The primary structure comprises 346 residues: Methionine import ATP-binding protein MetN (346 aa).

The ABC transporter domain maps to 2–243 (VRFEGISKTY…PKHPITQSFL (242 aa)). 40 to 47 (GRSGAGKS) provides a ligand contact to ATP.

The protein belongs to the ABC transporter superfamily. Methionine importer (TC 3.A.1.24) family. In terms of assembly, the complex is composed of two ATP-binding proteins (MetN), two transmembrane proteins (MetI) and a solute-binding protein (MetQ).

It localises to the cell inner membrane. It catalyses the reaction L-methionine(out) + ATP + H2O = L-methionine(in) + ADP + phosphate + H(+). The enzyme catalyses D-methionine(out) + ATP + H2O = D-methionine(in) + ADP + phosphate + H(+). Part of the ABC transporter complex MetNIQ involved in methionine import. Responsible for energy coupling to the transport system. The polypeptide is Methionine import ATP-binding protein MetN (Bradyrhizobium diazoefficiens (strain JCM 10833 / BCRC 13528 / IAM 13628 / NBRC 14792 / USDA 110)).